The primary structure comprises 124 residues: Small ribosomal subunit protein bS6 (124 aa).

The protein belongs to the bacterial ribosomal protein bS6 family.

Functionally, binds together with bS18 to 16S ribosomal RNA. The chain is Small ribosomal subunit protein bS6 from Haemophilus ducreyi (strain 35000HP / ATCC 700724).